Here is a 668-residue protein sequence, read N- to C-terminus: Bifunctional polymyxin resistance protein ArnA (668 aa).

Positions 1-307 are formyltransferase ArnAFT; the sequence is MSAKTVVFAY…ELGLVDGSLL (307 aa). H106 acts as the Proton donor; for formyltransferase activity in catalysis. (6R)-10-formyltetrahydrofolate is bound by residues R116 and 138 to 142; that span reads VKRAD. Residues 317-668 form a dehydrogenase ArnADH region; that stretch reads RRTRVLILGV…IERPSNKEAC (352 aa). NAD(+)-binding positions include D350 and 371–372; that span reads DI. Residues A396, Y401, and 435–436 each bind UDP-alpha-D-glucuronate; that span reads TS. Residue E437 is the Proton acceptor; for decarboxylase activity of the active site. Residues R463, N494, 528–537, and Y615 contribute to the UDP-alpha-D-glucuronate site; that span reads RLFDGGEQKR. The active-site Proton donor; for decarboxylase activity is R621.

It in the N-terminal section; belongs to the Fmt family. UDP-L-Ara4N formyltransferase subfamily. This sequence in the C-terminal section; belongs to the NAD(P)-dependent epimerase/dehydratase family. UDP-glucuronic acid decarboxylase subfamily. As to quaternary structure, homohexamer, formed by a dimer of trimers.

It catalyses the reaction UDP-alpha-D-glucuronate + NAD(+) = UDP-beta-L-threo-pentopyranos-4-ulose + CO2 + NADH. It carries out the reaction UDP-4-amino-4-deoxy-beta-L-arabinose + (6R)-10-formyltetrahydrofolate = UDP-4-deoxy-4-formamido-beta-L-arabinose + (6S)-5,6,7,8-tetrahydrofolate + H(+). Its pathway is nucleotide-sugar biosynthesis; UDP-4-deoxy-4-formamido-beta-L-arabinose biosynthesis; UDP-4-deoxy-4-formamido-beta-L-arabinose from UDP-alpha-D-glucuronate: step 1/3. The protein operates within nucleotide-sugar biosynthesis; UDP-4-deoxy-4-formamido-beta-L-arabinose biosynthesis; UDP-4-deoxy-4-formamido-beta-L-arabinose from UDP-alpha-D-glucuronate: step 3/3. It functions in the pathway bacterial outer membrane biogenesis; lipopolysaccharide biosynthesis. In terms of biological role, bifunctional enzyme that catalyzes the oxidative decarboxylation of UDP-glucuronic acid (UDP-GlcUA) to UDP-4-keto-arabinose (UDP-Ara4O) and the addition of a formyl group to UDP-4-amino-4-deoxy-L-arabinose (UDP-L-Ara4N) to form UDP-L-4-formamido-arabinose (UDP-L-Ara4FN). The modified arabinose is attached to lipid A and is required for resistance to polymyxin and cationic antimicrobial peptides. This chain is Bifunctional polymyxin resistance protein ArnA, found in Pseudomonas fluorescens (strain Pf0-1).